The primary structure comprises 184 residues: Guanylate kinase (184 aa).

The Guanylate kinase-like domain maps to 5-183 (KKLIIITGPS…TVKEVLKIIK (179 aa)). 12–19 (GPSGVGKG) lines the ATP pocket.

It belongs to the guanylate kinase family.

Its subcellular location is the cytoplasm. It catalyses the reaction GMP + ATP = GDP + ADP. Its function is as follows. Essential for recycling GMP and indirectly, cGMP. In Prochlorococcus marinus subsp. pastoris (strain CCMP1986 / NIES-2087 / MED4), this protein is Guanylate kinase.